Here is a 344-residue protein sequence, read N- to C-terminus: Anthranilate phosphoribosyltransferase (344 aa).

Residues Gly-85, 88 to 89 (GD), Thr-93, 95 to 98 (NIST), 113 to 121 (KHGNRSVSS), and Ser-125 contribute to the 5-phospho-alpha-D-ribose 1-diphosphate site. Gly-85 is a binding site for anthranilate. Residue Ser-97 participates in Mg(2+) binding. Residue Asn-116 coordinates anthranilate. Arg-171 is an anthranilate binding site. Mg(2+) is bound by residues Asp-229 and Glu-230.

This sequence belongs to the anthranilate phosphoribosyltransferase family. Homodimer. The cofactor is Mg(2+).

The enzyme catalyses N-(5-phospho-beta-D-ribosyl)anthranilate + diphosphate = 5-phospho-alpha-D-ribose 1-diphosphate + anthranilate. The protein operates within amino-acid biosynthesis; L-tryptophan biosynthesis; L-tryptophan from chorismate: step 2/5. Its function is as follows. Catalyzes the transfer of the phosphoribosyl group of 5-phosphorylribose-1-pyrophosphate (PRPP) to anthranilate to yield N-(5'-phosphoribosyl)-anthranilate (PRA). The polypeptide is Anthranilate phosphoribosyltransferase (Shewanella amazonensis (strain ATCC BAA-1098 / SB2B)).